Here is a 597-residue protein sequence, read N- to C-terminus: Cytosolic phospholipase A2 gamma (597 aa).

Positions 1–597 (MELSSGVCPA…FKKSHNISKD (597 aa)) constitute a PLA2c domain. The active-site Nucleophile is the Ser-83. Catalysis depends on Asp-417, which acts as the Proton acceptor. A disordered region spans residues 576–597 (RVKDPQGSQTVEFKKSHNISKD). The segment covering 587–597 (EFKKSHNISKD) has biased composition (basic and acidic residues).

Highly expressed in ovary, where it localizes to oocytes in preantral and antral stage follicles (at protein level). Not detected in other tissues tested.

The protein localises to the nucleus. Its subcellular location is the nucleoplasm. It localises to the nucleus envelope. The protein resides in the cytoplasm. It is found in the cell cortex. The protein localises to the cytoskeleton. Its subcellular location is the spindle. It carries out the reaction a 1,2-diacyl-sn-glycero-3-phosphocholine + H2O = a 1-acyl-sn-glycero-3-phosphocholine + a fatty acid + H(+). The catalysed reaction is a 1-O-alkyl-2-acyl-sn-glycero-3-phosphocholine + H2O = a 1-O-alkyl-sn-glycero-3-phosphocholine + a fatty acid + H(+). The enzyme catalyses 1,2-dihexadecanoyl-sn-glycero-3-phosphocholine + H2O = 1-hexadecanoyl-sn-glycero-3-phosphocholine + hexadecanoate + H(+). It catalyses the reaction 1-hexadecanoyl-2-(9Z-octadecenoyl)-sn-glycero-3-phosphocholine + H2O = 1-hexadecanoyl-sn-glycero-3-phosphocholine + (9Z)-octadecenoate + H(+). It carries out the reaction 1-hexadecanoyl-2-(9Z,12Z-octadecadienoyl)-sn-glycero-3-phosphocholine + H2O = (9Z,12Z)-octadecadienoate + 1-hexadecanoyl-sn-glycero-3-phosphocholine + H(+). The catalysed reaction is 1-hexadecanoyl-2-(5Z,8Z,11Z,14Z-eicosatetraenoyl)-sn-glycero-3-phosphocholine + H2O = 1-hexadecanoyl-sn-glycero-3-phosphocholine + (5Z,8Z,11Z,14Z)-eicosatetraenoate + H(+). The enzyme catalyses 1-O-hexadecyl-2-(5Z,8Z,11Z,14Z)-eicosatetraenoyl-sn-glycero-3-phosphocholine + H2O = 1-O-hexadecyl-sn-glycero-3-phosphocholine + (5Z,8Z,11Z,14Z)-eicosatetraenoate + H(+). It catalyses the reaction 1-hexadecanoyl-2-(5Z,8Z,11Z,14Z-eicosatetraenoyl)-sn-glycero-3-phosphocholine + H2O = 2-(5Z,8Z,11Z,14Z)-eicosatetraenoyl-sn-glycero-3-phosphocholine + hexadecanoate + H(+). It carries out the reaction a 1-acyl-sn-glycero-3-phosphocholine + H2O = sn-glycerol 3-phosphocholine + a fatty acid + H(+). The catalysed reaction is 1-hexadecanoyl-sn-glycero-3-phosphocholine + H2O = sn-glycerol 3-phosphocholine + hexadecanoate + H(+). The enzyme catalyses 2 1-hexadecanoyl-sn-glycero-3-phosphocholine = 1,2-dihexadecanoyl-sn-glycero-3-phosphocholine + sn-glycerol 3-phosphocholine. It catalyses the reaction 1-hexadecanoyl-sn-glycero-3-phosphoethanolamine + 1-hexadecanoyl-sn-glycero-3-phosphocholine = 1,2-dihexadecanoyl-sn-glycero-3-phosphoethanolamine + sn-glycerol 3-phosphocholine. It carries out the reaction 1-hexadecanoyl-sn-glycero-3-phosphoethanolamine + 1-hexadecanoyl-sn-glycero-3-phosphocholine = sn-glycero-3-phosphoethanolamine + 1,2-dihexadecanoyl-sn-glycero-3-phosphocholine. The catalysed reaction is 2 1-hexadecanoyl-sn-glycero-3-phosphoethanolamine = 1,2-dihexadecanoyl-sn-glycero-3-phosphoethanolamine + sn-glycero-3-phosphoethanolamine. The enzyme catalyses 1-O-hexadecyl-sn-glycero-3-phosphocholine + 1-hexadecanoyl-sn-glycero-3-phosphocholine = 1-O-hexadecyl-2-hexadecanoyl-sn-glycero-3-phosphocholine + sn-glycerol 3-phosphocholine. It catalyses the reaction a 1-O-(1Z-alkenyl)-sn-glycero-3-phosphoethanolamine + 1-hexadecanoyl-sn-glycero-3-phosphocholine = 1-O-(1Z)-alkenyl-2-hexadecanoyl-sn-glycero-3-phosphoethanolamine + sn-glycerol 3-phosphocholine. It carries out the reaction 1-O-hexadecyl-sn-glycero-3-phosphocholine + 1-hexadecanoyl-sn-glycero-3-phosphoethanolamine = 1-O-hexadecyl-2-hexadecanoyl-sn-glycero-3-phosphocholine + sn-glycero-3-phosphoethanolamine. The catalysed reaction is 1-octadecanoyl-2-(5Z,8Z,11Z,14Z)-eicosatetraenoyl-sn-glycero-3-phosphoethanolamine + 1-hexadecanoyl-sn-glycero-3-phosphocholine = 1-octadecanoyl-sn-glycero-3-phosphoethanolamine + 1-hexadecanoyl-2-(5Z,8Z,11Z,14Z-eicosatetraenoyl)-sn-glycero-3-phosphocholine. The enzyme catalyses 1-octadecanoyl-2-(5Z,8Z,11Z,14Z)-eicosatetraenoyl-sn-glycero-3-phosphoethanolamine + 1-O-hexadecyl-sn-glycero-3-phosphocholine = 1-octadecanoyl-sn-glycero-3-phosphoethanolamine + 1-O-hexadecyl-2-(5Z,8Z,11Z,14Z)-eicosatetraenoyl-sn-glycero-3-phosphocholine. It catalyses the reaction 1-hexadecanoyl-2-(9Z,12Z-octadecadienoyl)-sn-glycero-3-phosphocholine + a 1-O-(1Z-alkenyl)-sn-glycero-3-phosphoethanolamine = 1-O-(1Z-alkenyl)-2-(9Z,12Z-octadecadienoyl)-sn-glycero-3-phosphoethanolamine + 1-hexadecanoyl-sn-glycero-3-phosphocholine. It carries out the reaction 1-hexadecanoyl-2-(5Z,8Z,11Z,14Z-eicosatetraenoyl)-sn-glycero-3-phosphocholine + a 1-O-(1Z-alkenyl)-sn-glycero-3-phosphoethanolamine = 1-O-(1Z)-alkenyl-2-(5Z,8Z,11Z,14Z)-eicosatetraenoyl-sn-glycero-3-phosphoethanolamine + 1-hexadecanoyl-sn-glycero-3-phosphocholine. In terms of biological role, calcium-independent phospholipase, lysophospholipase and O-acyltransferase involved in phospholipid remodeling. Preferentially hydrolyzes the ester bond of the fatty acyl group attached at sn-2 position of phospholipids with choline and ethanolamine head groups, producing lysophospholipids that are used in deacylation-reacylation cycles. Transfers the sn-1 fatty acyl from one lysophospholipid molecule to the sn-2 position of another lysophospholipid to form diacyl, alkylacyl and alkenylacyl glycerophospholipids. Cleaves ester bonds but not alkyl or alkenyl ether bonds at the sn-1 position of lysophospholipids. Catalyzes sn-2 fatty acyl transfer from phospholipids to the sn-2 position of 1-O-alkyl or 1-O-alkenyl lysophospholipids with lower efficiency. This Mus musculus (Mouse) protein is Cytosolic phospholipase A2 gamma.